The primary structure comprises 591 residues: PDZ and LIM domain protein 5 (591 aa).

Serine 2 carries the post-translational modification N-acetylserine. The residue at position 2 (serine 2) is a Phosphoserine. Residues 2–85 (SNYNVSLVGP…SLNMTLQRAS (84 aa)) enclose the PDZ domain. Lysine 89 is subject to N6-acetyllysine; alternate. The residue at position 89 (lysine 89) is an N6-succinyllysine; alternate. Lysine 89 is covalently cross-linked (Glycyl lysine isopeptide (Lys-Gly) (interchain with G-Cter in SUMO2); alternate). Residues serine 111, serine 134, and serine 137 each carry the phosphoserine modification. Disordered stretches follow at residues 125-240 (YNKV…GPPR) and 255-334 (THSD…SNRP). Polar residues predominate over residues 134–143 (SVSSPKVTSI). The segment covering 144 to 161 (PSPSSAFTPAHAATSSHA) has biased composition (low complexity). Over residues 162-174 (SPPPVAAVTPPPL) the composition is skewed to pro residues. Polar residues-rich tracts occupy residues 183–195 (ANPSAAQCSSPPN) and 207–217 (PTVTSVCSESA). Phosphoserine is present on residues serine 228 and serine 260. 2 stretches are compositionally biased toward basic and acidic residues: residues 258–273 (DASKKRLIEDTEDWRP) and 293–304 (EHLKESENDNAK). Residues 310–329 (PEPSQQSASPLSAAESLESP) show a composition bias toward low complexity. Serine 313 and serine 318 each carry phosphoserine. Position 346 is an N6-acetyllysine (lysine 346). Residues 348-398 (VGSTSVKSPSWQRPNQAAPSTGRISNSASSSGTGAPMKPAVGPPQPSDQDT) are disordered. Positions 349–380 (GSTSVKSPSWQRPNQAAPSTGRISNSASSSGT) are enriched in polar residues. Phosphoserine is present on residues serine 355 and serine 357. LIM zinc-binding domains follow at residues 413-472 (PMCA…FFAP), 472-531 (PECG…LFGT), and 531-591 (TICR…SVNF).

Interacts with various PKC isoforms through the LIM domains. Interacts with actin and alpha-actinin through the PDZ domain. Interacts (via LIM domains) with SIPA1L1/SPAR; this interaction may occur preferentially with isoform 1. Detected in brain, in neurons, including in hippocampal neurons, and glial cells (at protein level). Detected in heart and skeletal muscle.

The protein resides in the postsynaptic density. It is found in the presynapse. It localises to the postsynapse. Its subcellular location is the cytoplasm. The protein localises to the cytosol. Functionally, may play an important role in the heart development by scaffolding PKC to the Z-disk region. May play a role in the regulation of cardiomyocyte expansion. Isoforms lacking the LIM domains may negatively modulate the scaffolding activity of isoform 1. Overexpression promotes the development of heart hypertrophy. Contributes to the regulation of dendritic spine morphogenesis in neurons. May be required to restrain postsynaptic growth of excitatory synapses. Isoform 1, but not isoform 2, expression favors spine thinning and elongation. In Rattus norvegicus (Rat), this protein is PDZ and LIM domain protein 5 (Pdlim5).